Reading from the N-terminus, the 633-residue chain is Opioid growth factor receptor (633 aa).

Met-1 is modified (N-acetylmethionine). The span at 1–38 (MDDPECDSTWEDESEEDGEDGQADDTTDEDTGDDDGDA) shows a compositional bias: acidic residues. Residues 1-44 (MDDPECDSTWEDESEEDGEDGQADDTTDEDTGDDDGDAEEARPS) form a disordered region. Residues 257–286 (RRELVHFAWEHFKPRREFVWGPRDKLRRFR) carry the Bipartite nuclear localization signal motif. The interval 287 to 390 (PQTISRPLMG…EPDPQGVSEV (104 aa)) is disordered. Ser-327, Ser-340, Ser-361, Ser-365, Ser-403, and Ser-452 each carry phosphoserine. Positions 351 to 374 (GDQRHEAKSPSPKESKKRKLEGNR) are enriched in basic and acidic residues. The tract at residues 404–633 (PTSQEPREAE…IEASVEPPKP (230 aa)) is disordered. The span at 441–455 (ASNTQVQASALSPTP) shows a compositional bias: polar residues. A run of 14 repeats spans residues 467 to 475 (GPEDPKSQV), 476 to 484 (GPEDPKSQV), 485 to 493 (GPEDPKSQV), 494 to 502 (GPEDPKSQV), 503 to 511 (GPEDPKGQV), 512 to 520 (EPEDPKGQV), 521 to 529 (GPEDPKGQV), 530 to 538 (GPEDPKGQV), 539 to 547 (GPEDPKSQV), 548 to 556 (GPEDPKSQV), 557 to 565 (EPEDPKSQV), 566 to 574 (EPEDPKSQV), 575 to 583 (EPEDPKSQV), and 584 to 592 (GPEDPQSQV). The 14 X approximate tandem repeats stretch occupies residues 467–592 (GPEDPKSQVG…VGPEDPQSQV (126 aa)). The segment covering 505–517 (EDPKGQVEPEDPK) has biased composition (basic and acidic residues). Residues 550–580 (EDPKSQVEPEDPKSQVEPEDPKSQVEPEDPK) show a composition bias toward basic and acidic residues. 2 positions are modified to phosphoserine: Ser-601 and Ser-608.

Belongs to the opioid growth factor receptor family. In terms of tissue distribution, expressed in all tissues examined, including brain, heart, lung, liver, kidney and skeletal muscle.

The protein resides in the cytoplasm. It is found in the nucleus. Its function is as follows. Receptor for opioid growth factor (OGF), also known as Met-enkephalin. Seems to be involved in growth regulation. The chain is Opioid growth factor receptor (Ogfr) from Mus musculus (Mouse).